The sequence spans 117 residues: UPF0295 protein RBAM_008830 (117 aa).

Helical transmembrane passes span 13-33 (TFAL…LFFK) and 41-61 (LFMI…FWIG).

The protein belongs to the UPF0295 family.

It is found in the cell membrane. The sequence is that of UPF0295 protein RBAM_008830 from Bacillus velezensis (strain DSM 23117 / BGSC 10A6 / LMG 26770 / FZB42) (Bacillus amyloliquefaciens subsp. plantarum).